A 67-amino-acid chain; its full sequence is Large ribosomal subunit protein uL29 (67 aa).

This sequence belongs to the universal ribosomal protein uL29 family.

In Pelotomaculum thermopropionicum (strain DSM 13744 / JCM 10971 / SI), this protein is Large ribosomal subunit protein uL29.